The chain runs to 103 residues: MSHTILLVQPGRNPETRTYSDYESVNECMEGVCKIYEEHLKRRNPNTPTITYDISQLFDFVDQLADLSCLVYQKSTNTYAPYNKEWIKEKIYVLLRQAAGTTD.

The protein belongs to the E(R) family. In terms of assembly, homodimer.

May have a role in the cell cycle. The chain is Enhancer of rudimentary homolog from Aedes aegypti (Yellowfever mosquito).